Reading from the N-terminus, the 456-residue chain is Histidine--tRNA ligase (456 aa).

Positions 1–20 (MTQSENVAAAGGAKTEPKVR) are disordered.

The protein belongs to the class-II aminoacyl-tRNA synthetase family. As to quaternary structure, homodimer.

It is found in the cytoplasm. The enzyme catalyses tRNA(His) + L-histidine + ATP = L-histidyl-tRNA(His) + AMP + diphosphate + H(+). In Cupriavidus necator (strain ATCC 17699 / DSM 428 / KCTC 22496 / NCIMB 10442 / H16 / Stanier 337) (Ralstonia eutropha), this protein is Histidine--tRNA ligase.